A 459-amino-acid chain; its full sequence is Putative BTB/POZ domain-containing protein R541 (459 aa).

One can recognise a BTB domain in the interval 76–143 (NHITINVGGK…NQKSTNIELY (68 aa)).

It belongs to the mimivirus BTB/WD family.

The sequence is that of Putative BTB/POZ domain-containing protein R541 from Acanthamoeba polyphaga mimivirus (APMV).